We begin with the raw amino-acid sequence, 160 residues long: Phosphopantetheine adenylyltransferase (160 aa).

T10 contributes to the substrate binding site. Residues 10–11 (TF) and H18 each bind ATP. Substrate-binding residues include K42, M74, and R88. ATP contacts are provided by residues 89-91 (GLR), E99, and 124-130 (LSFLSSS).

This sequence belongs to the bacterial CoaD family. In terms of assembly, homohexamer. Mg(2+) is required as a cofactor.

It localises to the cytoplasm. The catalysed reaction is (R)-4'-phosphopantetheine + ATP + H(+) = 3'-dephospho-CoA + diphosphate. The protein operates within cofactor biosynthesis; coenzyme A biosynthesis; CoA from (R)-pantothenate: step 4/5. Reversibly transfers an adenylyl group from ATP to 4'-phosphopantetheine, yielding dephospho-CoA (dPCoA) and pyrophosphate. The sequence is that of Phosphopantetheine adenylyltransferase from Photorhabdus laumondii subsp. laumondii (strain DSM 15139 / CIP 105565 / TT01) (Photorhabdus luminescens subsp. laumondii).